The chain runs to 299 residues: 4-hydroxybenzoate octaprenyltransferase (299 aa).

7 consecutive transmembrane segments (helical) span residues 31–51 (IGIYLVLWPTLWSLWIAADGL), 54–74 (WDVLVIFVLGVVLMRSAGCVI), 105–125 (VLFFVALLVIAFILVLFTNPL), 148–168 (QLPQIVLGAAFAWSIPMAFAA), 177–197 (IWVLYTAVVLWTVAYDTFYAM), 241–261 (FGLGFSFKVSLLVAGGLFAYQ), and 277–297 (FLHNNWVGLVVFLGILVDKLI).

The protein belongs to the UbiA prenyltransferase family. Mg(2+) is required as a cofactor.

Its subcellular location is the cell inner membrane. The catalysed reaction is all-trans-octaprenyl diphosphate + 4-hydroxybenzoate = 4-hydroxy-3-(all-trans-octaprenyl)benzoate + diphosphate. The protein operates within cofactor biosynthesis; ubiquinone biosynthesis. In terms of biological role, catalyzes the prenylation of para-hydroxybenzoate (PHB) with an all-trans polyprenyl group. Mediates the second step in the final reaction sequence of ubiquinone-8 (UQ-8) biosynthesis, which is the condensation of the polyisoprenoid side chain with PHB, generating the first membrane-bound Q intermediate 3-octaprenyl-4-hydroxybenzoate. The protein is 4-hydroxybenzoate octaprenyltransferase of Saccharophagus degradans (strain 2-40 / ATCC 43961 / DSM 17024).